The sequence spans 386 residues: Chaperone protein DnaJ (386 aa).

The J domain occupies 5–70 (DYYEVLGVER…QKRAAYDRYG (66 aa)). Residues 138–216 (GKDETIHVPQ…CGGHGQVKEE (79 aa)) form a CR-type zinc finger. Cys-151, Cys-154, Cys-168, Cys-171, Cys-190, Cys-193, Cys-204, and Cys-207 together coordinate Zn(2+). CXXCXGXG motif repeat units lie at residues 151-158 (CRPCEGTG), 168-175 (CETCGGHG), 190-197 (CHICQGRG), and 204-211 (CKTCGGHG).

It belongs to the DnaJ family. In terms of assembly, homodimer. The cofactor is Zn(2+).

The protein localises to the cytoplasm. Its function is as follows. Participates actively in the response to hyperosmotic and heat shock by preventing the aggregation of stress-denatured proteins and by disaggregating proteins, also in an autonomous, DnaK-independent fashion. Unfolded proteins bind initially to DnaJ; upon interaction with the DnaJ-bound protein, DnaK hydrolyzes its bound ATP, resulting in the formation of a stable complex. GrpE releases ADP from DnaK; ATP binding to DnaK triggers the release of the substrate protein, thus completing the reaction cycle. Several rounds of ATP-dependent interactions between DnaJ, DnaK and GrpE are required for fully efficient folding. Also involved, together with DnaK and GrpE, in the DNA replication of plasmids through activation of initiation proteins. The protein is Chaperone protein DnaJ of Hyphomonas neptunium (strain ATCC 15444).